Reading from the N-terminus, the 245-residue chain is Putative binding protein HI_1525 (245 aa).

The first 19 residues, 1–19 (MKKLVAVTSMILTTFSVQA), serve as a signal peptide directing secretion. The molybdate site is built by Ser-56 and Val-163.

Belongs to the bacterial solute-binding protein ModA family.

The protein localises to the periplasm. In terms of biological role, probably involved in the binding-dependent system. This is Putative binding protein HI_1525 from Haemophilus influenzae (strain ATCC 51907 / DSM 11121 / KW20 / Rd).